Here is a 960-residue protein sequence, read N- to C-terminus: Phosphoenolpyruvate carboxylase 1 (960 aa).

Position 7 is a phosphoserine (S7). Catalysis depends on residues H168 and K596.

It belongs to the PEPCase type 1 family. As to quaternary structure, homotetramer. Requires Mg(2+) as cofactor.

The protein resides in the cytoplasm. The catalysed reaction is oxaloacetate + phosphate = phosphoenolpyruvate + hydrogencarbonate. It functions in the pathway photosynthesis; C3 acid pathway. Its activity is regulated as follows. By light-reversible phosphorylation. Its function is as follows. Through the carboxylation of phosphoenolpyruvate (PEP) it forms oxaloacetate, a four-carbon dicarboxylic acid source for the tricarboxylic acid cycle. In Sorghum bicolor (Sorghum), this protein is Phosphoenolpyruvate carboxylase 1 (PEPC).